The sequence spans 57 residues: Small ribosomal subunit protein bS21B (57 aa).

A disordered region spans residues 37 to 57 (RYEKPSARRKRKAEAARKRRR). The segment covering 43 to 57 (ARRKRKAEAARKRRR) has biased composition (basic residues).

The protein belongs to the bacterial ribosomal protein bS21 family.

The protein is Small ribosomal subunit protein bS21B of Gloeobacter violaceus (strain ATCC 29082 / PCC 7421).